A 585-amino-acid polypeptide reads, in one-letter code: Arginine--tRNA ligase (585 aa).

Residues 126–136 carry the 'HIGH' region motif; that stretch reads PNIAKEMHVGH.

The protein belongs to the class-I aminoacyl-tRNA synthetase family. Monomer.

The protein resides in the cytoplasm. The enzyme catalyses tRNA(Arg) + L-arginine + ATP = L-arginyl-tRNA(Arg) + AMP + diphosphate. This is Arginine--tRNA ligase from Trichodesmium erythraeum (strain IMS101).